A 339-amino-acid chain; its full sequence is Adenylosuccinate synthetase (339 aa).

GTP contacts are provided by residues glycine 12–serine 18 and glycine 42–serine 44. Aspartate 13 serves as the catalytic Proton acceptor. Positions 13 and 42 each coordinate Mg(2+). IMP is bound by residues aspartate 13 to lysine 16, asparagine 40 to histidine 43, threonine 127, arginine 141, glutamine 179, threonine 194, and arginine 256. Histidine 43 acts as the Proton donor in catalysis. Substrate is bound at residue threonine 252–arginine 258. Residues arginine 258, methionine 284–aspartate 286, and lysine 324–glycine 326 each bind GTP.

This sequence belongs to the adenylosuccinate synthetase family. In terms of assembly, homodimer. The cofactor is Mg(2+).

It is found in the cytoplasm. It carries out the reaction IMP + L-aspartate + GTP = N(6)-(1,2-dicarboxyethyl)-AMP + GDP + phosphate + 2 H(+). It participates in purine metabolism; AMP biosynthesis via de novo pathway; AMP from IMP: step 1/2. Functionally, plays an important role in the de novo pathway of purine nucleotide biosynthesis. Catalyzes the first committed step in the biosynthesis of AMP from IMP. The polypeptide is Adenylosuccinate synthetase (Thermococcus sibiricus (strain DSM 12597 / MM 739)).